A 219-amino-acid chain; its full sequence is Ribonuclease HII (219 aa).

The 190-residue stretch at 30–219 (RVIAGIDEAG…VREHVTCPSS (190 aa)) folds into the RNase H type-2 domain. Residues D36, E37, and D128 each coordinate a divalent metal cation.

The protein belongs to the RNase HII family. The cofactor is Mn(2+). Requires Mg(2+) as cofactor.

The protein resides in the cytoplasm. The catalysed reaction is Endonucleolytic cleavage to 5'-phosphomonoester.. In terms of biological role, endonuclease that specifically degrades the RNA of RNA-DNA hybrids. The sequence is that of Ribonuclease HII from Pelobacter propionicus (strain DSM 2379 / NBRC 103807 / OttBd1).